Consider the following 735-residue polypeptide: 1,4-alpha-glucan branching enzyme GlgB (735 aa).

Asp414 functions as the Nucleophile in the catalytic mechanism. The Proton donor role is filled by Glu469.

It belongs to the glycosyl hydrolase 13 family. GlgB subfamily. Monomer.

It carries out the reaction Transfers a segment of a (1-&gt;4)-alpha-D-glucan chain to a primary hydroxy group in a similar glucan chain.. The protein operates within glycan biosynthesis; glycogen biosynthesis. In terms of biological role, catalyzes the formation of the alpha-1,6-glucosidic linkages in glycogen by scission of a 1,4-alpha-linked oligosaccharide from growing alpha-1,4-glucan chains and the subsequent attachment of the oligosaccharide to the alpha-1,6 position. The protein is 1,4-alpha-glucan branching enzyme GlgB of Burkholderia lata (strain ATCC 17760 / DSM 23089 / LMG 22485 / NCIMB 9086 / R18194 / 383).